The following is a 544-amino-acid chain: MAASSANKSRPLANFHPTVWGYHFLSYTHEITNQEKVEVDEYKETIRKMLVEAPEGSEQKLVLIDAMQRLGVAYHFHNEIETSIQNIFDAPKQNNNLHIVSLRFRLVRQQGHYMSSDVFKQFTNQDGKFKETLTNDVQGLLSLYEASYLRVRDEEILEEALAFTTTHLKSIVSTMSNNNNSLKVEVSEALTQPIRMTLPRMEARRYISIYENNDAHNHLLLKFAKLDFNMLQKLHQRELSDLTRWWKDLDFANKYPYARDRLVECYFWILGVYFEPKYSRARKMMTKVLKMTSIIDDTFDAYATFDELEPFNDAIQRWDANAIDSIPPYMRPAYQAFLDIYSEMEQVLSKKGKLDRVYYAKNEMKKLVRAYFKETQWLNDCDHIPKYEEHMENSLVSGGYMMIPTTCLVGMEEFISIETFEWLMNDPLIVRASSLIARAMNDIVGHEVEQERGHVASLIECYMKDYGASKQEAYAKFKKDVTNAWKDINKEFFRPTEVPMFVLERVLNLTRAAEPLYKEKDAYTNAKGKLKNMINSILIESVKI.

3 residues coordinate Mg(2+): Asp296, Asp300, and Glu449. A DDXXD motif motif is present at residues 296 to 300 (DDTFD).

Belongs to the terpene synthase family. Mg(2+) serves as cofactor. Mn(2+) is required as a cofactor.

It localises to the cytoplasm. It carries out the reaction (2E,6E)-farnesyl diphosphate = (1E,4E)-germacrene B + diphosphate. Its pathway is secondary metabolite biosynthesis; terpenoid biosynthesis. Its function is as follows. Involved in the biosynthesis of germacrene B. This chain is (E,E)-germacrene B synthase (SSTLH1), found in Solanum habrochaites (Wild tomato).